We begin with the raw amino-acid sequence, 524 residues long: Cytochrome P450 monooxygenase lnaC (524 aa).

A helical transmembrane segment spans residues 16-36 (ALAVSCIAVSLFLLSPWIAYA). The N-linked (GlcNAc...) asparagine glycan is linked to Asn-150. Cys-471 is a heme binding site.

This sequence belongs to the cytochrome P450 family. Heme serves as cofactor.

The protein localises to the membrane. It participates in secondary metabolite biosynthesis. In terms of biological role, cytochrome P450 monooxygenase; part of the lna gene cluster that mediates the biosynthesis of diastereomeric piperazines. Lna and lnb clusters encode sets of enzymes that produce overlapping sets of previously undescribed metabolites such as piperazinomycin-like metabolites or morpholine. The lna and lnb biosynthetic pathways appear to be part of a signaling network that controls the formation of sclerotia, a resilient overwintering structure. One primary function of the non-canonical nonribosomal peptide synthetases lnaA and lnbA consists in the reduction of L-tyrosine. The presence in the clusters of tailoring enzymes such as the oxidoreductases lnaB, lnbB, lnaE or lnbE, as well as of the cytochrome P450 monooxygenases lnaC, lnaD, or lnbC, might explain formation of various diastereomeric piperazines. This is Cytochrome P450 monooxygenase lnaC from Aspergillus flavus (strain ATCC 200026 / FGSC A1120 / IAM 13836 / NRRL 3357 / JCM 12722 / SRRC 167).